We begin with the raw amino-acid sequence, 362 residues long: Forkhead box protein F (362 aa).

The segment at 19-70 is disordered; sequence LDSTAPNNSHRTIKAENYFNEDEEDYNENSHEDSEDSKEDSDGQGCRSRKRK. Residues 37 to 57 show a composition bias toward acidic residues; that stretch reads FNEDEEDYNENSHEDSEDSKE. The segment at residues 72–169 is a DNA-binding region (fork-head); sequence KPPFSYIALI…EENGFRRRPR (98 aa).

Its subcellular location is the nucleus. Its function is as follows. Transcription factor that is required for cell fate of coelomocytes which are non-muscle mesodermal cells. Acts in concert with, and by activating expression of, the homeodomain gene ceh-34. Binds to the sequence motif 5'-ATAAA[T/C]A-3'. The protein is Forkhead box protein F of Caenorhabditis elegans.